Here is a 195-residue protein sequence, read N- to C-terminus: MAPPVRYCIPGERLCNLEEGSPGSGTYTRHGYIFSSLAGCLMKTSENGAVPVVSVMRETESQLLPDVGAVVTCKVSSINSRFAKVHILYVGSTPLKNAFRGTIRKEDIRATEKDKVEIYKSFRPGDIVLAKVISLGDAQSNYLLTTAENELGVVVAHSESGVQMVPISWCEMQCPKTHTKEFRKVARVQPEFLQT.

Serine 21 carries the post-translational modification Phosphoserine. The S1 motif domain maps to 66 to 147; it reads DVGAVVTCKV…AQSNYLLTTA (82 aa).

This sequence belongs to the CSL4 family. Component of the RNA exosome core complex (Exo-9), composed of EXOSC1, EXOSC2, EXOSC3, EXOSC4, EXOSC5, EXOSC6, EXOSC7, EXOSC8 and EXOSC9; within the complex interacts with EXOSC6. The catalytically inactive RNA exosome core complex (Exo-9) associates with the catalytic subunit EXOSC10/RRP6. Exo-9 may associate with DIS3 to form the nucleolar exosome complex, or DIS3L to form the cytoplasmic exosome complex. Exo-9 is formed by a hexameric base ring consisting of the heterodimers EXOSC4-EXOSC9, EXOSC5-EXOSC8 and EXOSC6-EXOSC7, and a cap ring consisting of EXOSC1, EXOSC2 and EXOSC3. The RNA exosome complex associates with cofactors C1D/RRP47, MPHOSPH6/MPP6 and MTREX/MTR4. Interacts with DDX60.

It is found in the nucleus. The protein localises to the nucleolus. It localises to the cytoplasm. Its function is as follows. Non-catalytic component of the RNA exosome complex which has 3'-&gt;5' exoribonuclease activity and participates in a multitude of cellular RNA processing and degradation events. In the nucleus, the RNA exosome complex is involved in proper maturation of stable RNA species such as rRNA, snRNA and snoRNA, in the elimination of RNA processing by-products and non-coding 'pervasive' transcripts, such as antisense RNA species and promoter-upstream transcripts (PROMPTs), and of mRNAs with processing defects, thereby limiting or excluding their export to the cytoplasm. The RNA exosome may be involved in Ig class switch recombination (CSR) and/or Ig variable region somatic hypermutation (SHM) by targeting AICDA deamination activity to transcribed dsDNA substrates. In the cytoplasm, the RNA exosome complex is involved in general mRNA turnover and specifically degrades inherently unstable mRNAs containing AU-rich elements (AREs) within their 3' untranslated regions, and in RNA surveillance pathways, preventing translation of aberrant mRNAs. It seems to be involved in degradation of histone mRNA. The catalytic inactive RNA exosome core complex of 9 subunits (Exo-9) is proposed to play a pivotal role in the binding and presentation of RNA for ribonucleolysis, and to serve as a scaffold for the association with catalytic subunits and accessory proteins or complexes. EXOSC1 as peripheral part of the Exo-9 complex stabilizes the hexameric ring of RNase PH-domain subunits through contacts with EXOSC6 and EXOSC8. The chain is Exosome complex component CSL4 (Exosc1) from Mus musculus (Mouse).